We begin with the raw amino-acid sequence, 258 residues long: Flagellar brake protein YcgR (258 aa).

The PilZ domain occupies 131–248 (QKREYYRVAT…ALSLIQRYIT (118 aa)).

The protein belongs to the YcgR family. Monomer. Interacts with the flagellar basal bodies.

The protein localises to the bacterial flagellum basal body. Its function is as follows. Acts as a flagellar brake, regulating swimming and swarming in a bis-(3'-5') cyclic diguanylic acid (c-di-GMP)-dependent manner. Binds 1 c-di-GMP dimer per subunit. Increasing levels of c-di-GMP lead to decreased motility. This chain is Flagellar brake protein YcgR, found in Nitrosospira multiformis (strain ATCC 25196 / NCIMB 11849 / C 71).